Here is a 273-residue protein sequence, read N- to C-terminus: Flagellin FljM (273 aa).

This sequence belongs to the bacterial flagellin family. In C.crescentus, the flagellar filament is composed of multiple flagellins of 29 kDa; 27 kDa and 25 kDa.

The protein localises to the secreted. The protein resides in the bacterial flagellum. In terms of biological role, flagellin is the subunit protein which polymerizes to form the filaments of bacterial flagella. This is Flagellin FljM (fljM) from Caulobacter vibrioides (strain ATCC 19089 / CIP 103742 / CB 15) (Caulobacter crescentus).